Reading from the N-terminus, the 267-residue chain is Hydroxyethylthiazole kinase (267 aa).

Residue methionine 46 participates in substrate binding. Arginine 122 and serine 168 together coordinate ATP. Position 195 (glycine 195) interacts with substrate.

It belongs to the Thz kinase family. Mg(2+) is required as a cofactor.

It catalyses the reaction 5-(2-hydroxyethyl)-4-methylthiazole + ATP = 4-methyl-5-(2-phosphooxyethyl)-thiazole + ADP + H(+). Its pathway is cofactor biosynthesis; thiamine diphosphate biosynthesis; 4-methyl-5-(2-phosphoethyl)-thiazole from 5-(2-hydroxyethyl)-4-methylthiazole: step 1/1. Catalyzes the phosphorylation of the hydroxyl group of 4-methyl-5-beta-hydroxyethylthiazole (THZ). This chain is Hydroxyethylthiazole kinase, found in Nitratidesulfovibrio vulgaris (strain DSM 19637 / Miyazaki F) (Desulfovibrio vulgaris).